The sequence spans 276 residues: 1H-3-hydroxy-4-oxoquinaldine 2,4-dioxygenase (276 aa).

The 123-residue stretch at 28 to 150 (PAILLLPGWC…TLLKDPERWR (123 aa)) folds into the AB hydrolase-1 domain. Residues 36-38 (WCH), 100-101 (HS), and W160 each bind substrate. H251 serves as the catalytic Proton donor/acceptor.

Belongs to the AB hydrolase superfamily. None. Contrary to most other dioxygenases, this enzyme does not require a cofactor for catalysis. serves as cofactor.

It catalyses the reaction 3-hydroxy-2-methyl-1H-quinolin-4-one + O2 = N-acetylanthranilate + CO + H(+). In terms of biological role, ring-cleaving dioxygenase involved in quinaldine degradation and utilization. The protein is 1H-3-hydroxy-4-oxoquinaldine 2,4-dioxygenase (hod) of Paenarthrobacter nitroguajacolicus (Arthrobacter nitroguajacolicus).